The following is a 221-amino-acid chain: Casparian strip membrane protein 3 (221 aa).

A compositionally biased stretch (basic and acidic residues) spans 1-12 (MDIEKAASRREE). A disordered region spans residues 1–28 (MDIEKAASRREEEEPIVQRPKLDKGKGK). Residues 1 to 58 (MDIEKAASRREEEEPIVQRPKLDKGKGKAHVFAPPMNYNRIMDKHKQEKVSAAGWKRG) are Cytoplasmic-facing. The helical transmembrane segment at 59 to 79 (VAIFDFVLRLIAAITAMAAAA) threads the bilayer. Topologically, residues 80–109 (KMATTEETLPFFTQFLQFQAEYTDLPTMSS) are extracellular. The helical transmembrane segment at 110–130 (FVIVNSIVGGYLTLSLPFSIV) threads the bilayer. The Cytoplasmic segment spans residues 131-148 (CILRPLAVPPRLFLIICD). Residues 149–169 (TAMMGLTMMAASASAAIVYLA) traverse the membrane as a helical segment. Topologically, residues 170–194 (HNGNSSSNWLPVCQQFGDFCQGTSG) are extracellular. A glycan (N-linked (GlcNAc...) asparagine) is linked at Asn-173. The helical transmembrane segment at 195–215 (AVVASFIAATLLMFLVILSAF) threads the bilayer. The Cytoplasmic portion of the chain corresponds to 216–221 (ALKRST).

Belongs to the Casparian strip membrane proteins (CASP) family. As to quaternary structure, homodimer and heterodimers.

Its subcellular location is the cell membrane. Its function is as follows. Regulates membrane-cell wall junctions and localized cell wall deposition. Required for establishment of the Casparian strip membrane domain (CSD) and the subsequent formation of Casparian strips, a cell wall modification of the root endodermis that determines an apoplastic barrier between the intraorganismal apoplasm and the extraorganismal apoplasm and prevents lateral diffusion. This Arabidopsis lyrata subsp. lyrata (Lyre-leaved rock-cress) protein is Casparian strip membrane protein 3.